A 604-amino-acid polypeptide reads, in one-letter code: Dopamine receptor 3 (604 aa).

The Extracellular portion of the chain corresponds to 1 to 23; the sequence is MLTGQHHIPGIESPLMVVLWRVA. A helical membrane pass occupies residues 24–44; that stretch reads AGVFLPLVPTMAVFGNVLVIL. Residues 45 to 58 are Cytoplasmic-facing; it reads SVYRERNLQTVTNM. Residues 59–79 traverse the membrane as a helical segment; it reads LIVSLAVSDLFVAIGVMSFGV. Residues 80-96 are Extracellular-facing; the sequence is YYEWNGFKWGLGSFFCH. A disulfide bridge links C95 with C170. Residues 97–117 form a helical membrane-spanning segment; the sequence is VYQALDVACSTASILNLLAIS. The Cytoplasmic segment spans residues 118–141; the sequence is LDRYIAIGHPISYAQYGARGGRAM. The helical transmembrane segment at 142–162 threads the bilayer; the sequence is ISITIVWGVSCAVALPLLLGV. The Extracellular segment spans residues 163–179; the sequence is NPMENDQCELANPWFNM. A helical transmembrane segment spans residues 180–200; it reads ISSIFSFFIPCIAMIILYTII. The Cytoplasmic segment spans residues 201 to 520; sequence FRRLRQRERA…TKQMRREHKA (320 aa). Positions 399 to 430 are disordered; the sequence is SIQDEKKMNSRPPENPFAHQNGTNKQRLLPNP. A helical membrane pass occupies residues 521–541; it reads TVTLAVVLAVFLFCWLPFFIL. Topologically, residues 542-559 are extracellular; it reads HLSNSICLVIDSNSDCIG. A helical transmembrane segment spans residues 560-580; it reads FLPLYLATWLGYLNSSLNPLI. Residues 581–604 are Cytoplasmic-facing; it reads YTVFDQRFRNAFRNILSCGFFKKR.

It belongs to the G-protein coupled receptor 1 family.

It localises to the cell membrane. In terms of biological role, receptor for dopamine. The activity of this receptor is mediated by G proteins which activate adenylyl cyclase. In terms of antagonist responses, would be classed with the D2-like dopamine receptor group. Mediates the effect of dopamine on the inhibition of locomotion. Acts as an antagonist of dop-1. The chain is Dopamine receptor 3 from Caenorhabditis briggsae.